Consider the following 305-residue polypeptide: NK1 transcription factor-related protein 2 (305 aa).

Disordered regions lie at residues 51–158 (EEVE…KPRR) and 210–257 (KWKK…PGAL). Residues 87 to 96 (SEAEEEEEAE) are compositionally biased toward acidic residues. A compositionally biased stretch (basic and acidic residues) spans 97-115 (DAGRAHQPERWQGVHEGSP). Positions 129–140 (AEGLPASPGSPG) are enriched in low complexity. Residues 156–215 (PRRARTAFTYEQLVALENKFRATRYLSVCERLNLALSLSLTETQVKIWFQNRRTKWKKQN) constitute a DNA-binding region (homeobox).

This sequence belongs to the NK-1 homeobox family. In terms of assembly, interacts (via the homeodomain) with HIPK1, HIPK2, and HIPK3. Post-translationally, phosphorylated by HIPK2 in vitro. Expression detected in the brain, testis and spleen. In the testis, expressed in the germ cells of the seminiferous epithelium, predominantly in elongating spermatids and spermatozoa. Expressed throughout the brain with highest levels in regions of the cerebral cortex, hippocampus, diencephalon, pons, medulla and cerebellum.

The protein resides in the nucleus. It localises to the nucleolus. Its function is as follows. Transcriptional repressor. May play a role in early development as a Wnt/beta-catenin effector, hence controlling pluripotency and preimplantation development of embryonic stem cells. May promote adipogenesis in mesenchymal stem cells, possibly by inhibiting the expression of the antiadipogenic factor NR2F2. May inhibit osteoblastogenic differentiation. This is NK1 transcription factor-related protein 2 (Nkx1-2) from Mus musculus (Mouse).